A 1007-amino-acid polypeptide reads, in one-letter code: Inversin-A (1007 aa).

16 ANK repeats span residues 9–39, 43–72, 76–105, 109–140, 144–173, 177–209, 216–246, 250–279, 284–313, 317–346, 352–381, 385–414, 418–447, 451–480, 484–513, and 519–549; these read SLASPVQAAAVTGDKTTLLKLIASSPEVIDQ, LGRTPLMYSVLGDRRSCAEALLKHGAQVNH, SGRTALHLAAQTGNHRLLKLLLSRKADCTH, RDITAVHLSTRHQDTRCLALILKYTPPGQVDA, RKQTALHWSAYYNRPRHVRLLVRHGSNIGI, EGKIPLHWAAGHKDPEAALTVRCLLEAAPTESL, EGRTPLHLAVGDGNQEVVRLLTSYRGCNVAP, LFRTPLHWAALLGYTPIAHLLLETNNSPNI, QGATPLHYAAQGNCPDTVRVLLSHISVRDE, EGRTAFMWAAGKGSDEVVRTMLELDPELEV, YGGTALHAASLSGQITTVRILLENRVQVDA, MKHTALFRACEMGHREVISTLIKGGAKVHL, DGRSPLHWAALGGNANVCQILIENNINPDA, EGRTPLQCAAYGGYIGCMEVLMENKADPNI, NGRTALHWSCNNGYLDAVKLLLGYSAFPNQ, and ERYTPLDYALLGGHQEVIQFMLEHGALSIAA. The D-box 1 signature appears at 486–494; it reads RTALHWSCN. In terms of domain architecture, IQ 1 spans 551 to 580; the sequence is QDIAASKIQAVYKGHKVRRAFQERKNLLMK. Basic and acidic residues-rich tracts occupy residues 585–599 and 608–652; these read RKGAAAKKREGENRQ and GKQK…HQEE. Disordered stretches follow at residues 585-837 and 868-893; these read RKGA…KEFS and SAKSGQRPLTETQSPEKACQGSSALK. Positions 684–701 are enriched in polar residues; it reads IQSSPIEHVHTNSIQTRM. The span at 702–712 shows a compositional bias: low complexity; the sequence is SPSRTSISHSS. A compositionally biased stretch (polar residues) spans 727–745; the sequence is NPTQNNTQPRRTSRPQIES. The span at 751-771 shows a compositional bias: basic and acidic residues; it reads HRIEDLVQKESRRKSHREERK. Positions 772–784 are enriched in basic residues; the sequence is GSHRQRASSHHRL. Positions 870 to 893 are enriched in polar residues; it reads KSGQRPLTETQSPEKACQGSSALK. The D-box 2 motif lies at 964-972; that stretch reads RKQLFQRKK. The 30-residue stretch at 971–1000 folds into the IQ 2 domain; the sequence is KKHAATVIQKAWRTYCIRKSSRKTRHSHLR.

Interacts with apc2. Binds calmodulin.

It is found in the cytoplasm. The protein localises to the cytoskeleton. Its function is as follows. Required for normal renal development and establishment of left-right axis. Probably acts as a molecular switch between different Wnt signaling pathways. Inhibits the canonical Wnt pathway by targeting cytoplasmic disheveled for degradation by the ubiquitin-proteasome. This suggests that it is required in renal development to oppose the repression of terminal differentiation of tubular epithelial cells by Wnt signaling. Plays a central role in convergent extension movements in gastrulating embryos, a processus regulated by Wnt signaling. This Xenopus laevis (African clawed frog) protein is Inversin-A (invs-a).